A 702-amino-acid polypeptide reads, in one-letter code: Ferrioxamine B receptor (702 aa).

The signal sequence occupies residues 1-30 (MPLEMFMFATTRMALLIGGAIGGATFPLFA). Residues 55–168 (PDIETPQSVS…PGGIVALTSR (114 aa)) enclose the TBDR plug domain. The TBDR beta-barrel domain maps to 173-702 (DAGGEVKLFA…SIVGSVSWAF (530 aa)).

The protein belongs to the TonB-dependent receptor family.

The protein resides in the cell outer membrane. Its function is as follows. Ferrioxamine binding and uptake, in association with the TonB protein. The sequence is that of Ferrioxamine B receptor (foxA) from Salmonella typhimurium (strain LT2 / SGSC1412 / ATCC 700720).